The primary structure comprises 111 residues: Phosphoribosyl-ATP pyrophosphatase (111 aa).

The protein belongs to the PRA-PH family.

The protein localises to the cytoplasm. It catalyses the reaction 1-(5-phospho-beta-D-ribosyl)-ATP + H2O = 1-(5-phospho-beta-D-ribosyl)-5'-AMP + diphosphate + H(+). It functions in the pathway amino-acid biosynthesis; L-histidine biosynthesis; L-histidine from 5-phospho-alpha-D-ribose 1-diphosphate: step 2/9. The sequence is that of Phosphoribosyl-ATP pyrophosphatase from Pseudomonas paraeruginosa (strain DSM 24068 / PA7) (Pseudomonas aeruginosa (strain PA7)).